Reading from the N-terminus, the 200-residue chain is MTIRYPNGKRYNQALQPQKTKMKKHTYGNRGMSLEEELNETNQYYLSHNIACVHKKPTPLQIVKVDYPARSAAVVREAYFKQPSTTDYNGVYKGKYIDFEAKETKNKTNFPLQNFHLHQIEHMKQVIAHDGIAFVIIKFTLYNEIYLLDAKHVISFWNRKDTGGRKSITKQEIEEHGSLLSCGYHPRIDYISILDMVYFS.

Mg(2+)-binding residues include Thr85, Asp87, Glu100, and Gln119.

This sequence belongs to the RecU family. It depends on Mg(2+) as a cofactor.

The protein resides in the cytoplasm. The enzyme catalyses Endonucleolytic cleavage at a junction such as a reciprocal single-stranded crossover between two homologous DNA duplexes (Holliday junction).. Endonuclease that resolves Holliday junction intermediates in genetic recombination. Cleaves mobile four-strand junctions by introducing symmetrical nicks in paired strands. Promotes annealing of linear ssDNA with homologous dsDNA. Required for DNA repair, homologous recombination and chromosome segregation. The protein is Holliday junction resolvase RecU of Bacillus cytotoxicus (strain DSM 22905 / CIP 110041 / 391-98 / NVH 391-98).